The sequence spans 179 residues: Probable mitochondrial import inner membrane translocase subunit Tim17 1 (179 aa).

3 helical membrane-spanning segments follow: residues 17–37, 61–81, and 113–133; these read CGGAFAMGALGGGAFQAIKGF, LVGGNFAVWGATFSAIDCSLV, and LSSALVGGALLALIEGVGIVV.

This sequence belongs to the Tim17/Tim22/Tim23 family. In terms of assembly, component of the TIM23 complex at least composed of Tim23, Tim17 (Tim17a1, Tim17a2 or Tim17b1) and a Tim50. The complex interacts with the Tim44 component of the PAM complex.

It is found in the mitochondrion inner membrane. Functionally, essential component of the TIM23 complex, a complex that mediates the translocation of transit peptide-containing proteins across the mitochondrial inner membrane. The protein is Probable mitochondrial import inner membrane translocase subunit Tim17 1 (Tim17b1) of Drosophila melanogaster (Fruit fly).